A 391-amino-acid polypeptide reads, in one-letter code: Na(+)/H(+) antiporter NhaA (391 aa).

11 consecutive transmembrane segments (helical) span residues 14–34 (AGGILLMVSVVLAMILANSPL), 59–79 (LIHWINDGLMAIFFMLIGLEV), 95–115 (SLPTFAAIGGMVFPAAVYLIF), 124–144 (VGWAIPAATDIAFALGIMALL), 154–174 (VFLLALAIIDDLGVVVIIALF), 177–197 (TDLSTISLIIAAAAILGLIGL), 213–233 (LILWIAVLKSGVHATLAGVII), 261–281 (FIILPIFAFANAGVDLSGMSL), 292–312 (IALGLLVGKPLGIMLFSYIAV), 331–351 (VAVMCGIGFTMSMFISSLAFV), and 363–383 (LGILLGSIASATIGYFWLSKV).

It belongs to the NhaA Na(+)/H(+) (TC 2.A.33) antiporter family.

The protein resides in the cell inner membrane. It carries out the reaction Na(+)(in) + 2 H(+)(out) = Na(+)(out) + 2 H(+)(in). Na(+)/H(+) antiporter that extrudes sodium in exchange for external protons. In Shewanella pealeana (strain ATCC 700345 / ANG-SQ1), this protein is Na(+)/H(+) antiporter NhaA.